Consider the following 170-residue polypeptide: MIDLGISKLALIGAVALIVIGPERLPKVARTVGALVGRAQRYINDVKAEVSREVELEELRKMRTEFEDAARDVERTIHKEVNEQTQALNEALGGAEGTSGGGSADAGGGFVPSWDAAHKAHNGRKSWRVKQGARPLWFKRQHNVRVWVQSGAARVKRHRPVTRPSRSFFE.

The helical transmembrane segment at 1–21 (MIDLGISKLALIGAVALIVIG) threads the bilayer.

It belongs to the TatB family. In terms of assembly, the Tat system comprises two distinct complexes: a TatABC complex, containing multiple copies of TatA, TatB and TatC subunits, and a separate TatA complex, containing only TatA subunits. Substrates initially bind to the TatABC complex, which probably triggers association of the separate TatA complex to form the active translocon.

The protein resides in the cell inner membrane. Its function is as follows. Part of the twin-arginine translocation (Tat) system that transports large folded proteins containing a characteristic twin-arginine motif in their signal peptide across membranes. Together with TatC, TatB is part of a receptor directly interacting with Tat signal peptides. TatB may form an oligomeric binding site that transiently accommodates folded Tat precursor proteins before their translocation. The protein is Sec-independent protein translocase protein TatB of Cupriavidus necator (strain ATCC 17699 / DSM 428 / KCTC 22496 / NCIMB 10442 / H16 / Stanier 337) (Ralstonia eutropha).